The sequence spans 254 residues: MEDSEKKLNQKSDDKPRKVRFKISSSYSGRVLKQVFEDGQELESPKEEYPHSFLQEALEPMDGVYGSGEVPKPQPYSPKLTAQRISVFRDSGAYTLAGSQPLFNDYKANDHKPPPIIDFGKIIIYTNNLKIIRTPMDKRDFMRKILQKEDVAEEASLMITGENDGDREQGCPLPERNGSPLPESERTFLHSQHTQDGLVPEDCLHCQGSGIATCSLCHGSKFSMLANRFKESYRALRCPACNENGLQPCRICSP.

Over residues 1–16 (MEDSEKKLNQKSDDKP) the composition is skewed to basic and acidic residues. Disordered stretches follow at residues 1 to 20 (MEDS…RKVR) and 161 to 183 (GEND…PLPE).

The protein belongs to the GRXCR2 family. As to quaternary structure, interacts with TPRN; the interaction restricts TPRN to the stereocilum basal region. In terms of tissue distribution, expressed in sensory hair cells in the cochlea and vestibular organ.

Its subcellular location is the cell projection. The protein resides in the stereocilium. Its function is as follows. Required for hearing. Plays a role in maintaining cochlear stereocilia bundles that are involved in sound detection. Ensures the restriction of TPRN to the basal region of stereocilia in hair cells. The chain is Glutaredoxin domain-containing cysteine-rich protein 2 (Grxcr2) from Mus musculus (Mouse).